The sequence spans 1576 residues: eIF-2-alpha kinase GCN2 (1576 aa).

In terms of domain architecture, RWD spans 16–127; that stretch reads NEIEALKAIF…SIVQDYLNDW (112 aa). The tract at residues 180-204 is disordered; the sequence is QDELQRRSYETPQSSSKKKTNSKET. Protein kinase domains follow at residues 235 to 511 and 556 to 928; these read VLPL…HVIR and FEEL…EEFI. Residues 562 to 570 and lysine 585 each bind ATP; that span reads LGRGGFGEV. Positions 673–714 are disordered; that stretch reads YNSSADEEDPEASDISFQYSNTSDKEGSSDKDSSIEEASSVK. Positions 695-706 are enriched in basic and acidic residues; that stretch reads SDKEGSSDKDSS. Aspartate 772 functions as the Proton acceptor in the catalytic mechanism.

Belongs to the protein kinase superfamily. Ser/Thr protein kinase family. GCN2 subfamily. In terms of assembly, homodimer; homodimerization is important for kinase activation by uncharged tRNAs. Interacts (via N-terminal RWD domain) with gcn1 (via N- and C-terminus); this interaction stimulates gcn2 kinase activity in a gcn20-dependent manner in response to amino acid starvation. Interacts (via N-terminus) with the gcn1-gcn20 complex on translating ribosomes in amino acid-starved cells; gcn1 may bind near the ribosomal A-site and promotes the transfer of uncharged tRNAs from the A-site to the tRNA-binding domain in gcn2 for its subsequent kinase activation, and hence allowing fil1 translational activation and derepression of amino acid biosynthetic genes. In terms of processing, autophosphorylated.

The protein resides in the cytoplasm. It carries out the reaction L-seryl-[protein] + ATP = O-phospho-L-seryl-[protein] + ADP + H(+). The catalysed reaction is L-threonyl-[protein] + ATP = O-phospho-L-threonyl-[protein] + ADP + H(+). With respect to regulation, the integrated stress response (ISR) is activated in response to conditions that promote ribosome collisions: gcn1, which acts as a ribosome collision sensor, activates gcn2. The RQC pathway and the integrated stress response (ISR) antagonize each other: hel2 prevents the activation of gcn2, while gcn2 suppresses RQC activation. Ribosome stalling-induced integrated stress response prefers ribosomes with empty A sites. The kinase activity is stimulated upon binding to uncharged tRNAs. Functionally, metabolic-stress sensing protein kinase that phosphorylates the alpha subunit of eukaryotic translation initiation factor 2 (eIF-2-alpha/SUI2) on 'Ser-52' in response to low amino acid, carbon, or purine availability. Required for adapatation to nutrient starvation by acting as a key component of the integrated stress response (ISR), by which cells alter their translational and transcriptional output in response to starvation. Converts phosphorylated eIF-2-alpha/SUI2 either to a competitive inhibitor of translation initiation factor eIF-2B, leading to a global protein synthesis repression, and thus to a reduced overall utilization of amino acids, or to a translational initiation activation of specific mRNAs, such as the transcriptional activator GCN4, and hence allowing GCN4-mediated reprogramming of transcription to alleviate nutrient depletion. Binds uncharged tRNAs. The protein is eIF-2-alpha kinase GCN2 of Schizosaccharomyces pombe (strain 972 / ATCC 24843) (Fission yeast).